We begin with the raw amino-acid sequence, 69 residues long: DNA gyrase inhibitor YacG (69 aa).

The Zn(2+) site is built by Cys14, Cys17, Cys33, and Cys37. The interval 46-69 (ADEEKSIPGAPDMSDSDGWSEDQY) is disordered. Residues 59 to 69 (SDSDGWSEDQY) are compositionally biased toward acidic residues.

The protein belongs to the DNA gyrase inhibitor YacG family. As to quaternary structure, interacts with GyrB. The cofactor is Zn(2+).

Inhibits all the catalytic activities of DNA gyrase by preventing its interaction with DNA. Acts by binding directly to the C-terminal domain of GyrB, which probably disrupts DNA binding by the gyrase. The protein is DNA gyrase inhibitor YacG of Aliivibrio fischeri (strain ATCC 700601 / ES114) (Vibrio fischeri).